Reading from the N-terminus, the 339-residue chain is Ribosomal RNA large subunit methyltransferase M (339 aa).

S-adenosyl-L-methionine is bound by residues Ser-176, 206–209 (APGG), Asp-225, Asp-245, and Asp-261. Lys-290 acts as the Proton acceptor in catalysis.

The protein belongs to the class I-like SAM-binding methyltransferase superfamily. RNA methyltransferase RlmE family. RlmM subfamily. As to quaternary structure, monomer.

It localises to the cytoplasm. It catalyses the reaction cytidine(2498) in 23S rRNA + S-adenosyl-L-methionine = 2'-O-methylcytidine(2498) in 23S rRNA + S-adenosyl-L-homocysteine + H(+). Catalyzes the 2'-O-methylation at nucleotide C2498 in 23S rRNA. In Halorhodospira halophila (strain DSM 244 / SL1) (Ectothiorhodospira halophila (strain DSM 244 / SL1)), this protein is Ribosomal RNA large subunit methyltransferase M.